Reading from the N-terminus, the 498-residue chain is Lysine--tRNA ligase (498 aa).

Glutamate 401 and glutamate 408 together coordinate Mg(2+).

Belongs to the class-II aminoacyl-tRNA synthetase family. Homodimer. Mg(2+) is required as a cofactor.

It localises to the cytoplasm. It carries out the reaction tRNA(Lys) + L-lysine + ATP = L-lysyl-tRNA(Lys) + AMP + diphosphate. The protein is Lysine--tRNA ligase of Dehalococcoides mccartyi (strain ATCC BAA-2100 / JCM 16839 / KCTC 5957 / BAV1).